The chain runs to 113 residues: Integration host factor subunit alpha (113 aa).

A disordered region spans residues 87–113; the sequence is NALNGEVSDETTEGADDDDDEEGEGDE. The span at 93–113 shows a compositional bias: acidic residues; it reads VSDETTEGADDDDDEEGEGDE.

It belongs to the bacterial histone-like protein family. Heterodimer of an alpha and a beta chain.

This protein is one of the two subunits of integration host factor, a specific DNA-binding protein that functions in genetic recombination as well as in transcriptional and translational control. The chain is Integration host factor subunit alpha from Anaeromyxobacter dehalogenans (strain 2CP-1 / ATCC BAA-258).